Reading from the N-terminus, the 143-residue chain is Flagellar assembly factor FliW (143 aa).

Belongs to the FliW family. In terms of assembly, interacts with translational regulator CsrA and flagellin(s).

The protein localises to the cytoplasm. Its function is as follows. Acts as an anti-CsrA protein, binds CsrA and prevents it from repressing translation of its target genes, one of which is flagellin. Binds to flagellin and participates in the assembly of the flagellum. The sequence is that of Flagellar assembly factor FliW from Clostridium botulinum (strain ATCC 19397 / Type A).